The sequence spans 389 residues: Major outer membrane porin (389 aa).

The signal sequence occupies residues 1–23 (MKKLLKSALLSAAFAGSVGSLQA).

Belongs to the chlamydial porin (CP) (TC 1.B.2) family. As to quaternary structure, part of a disulfide cross-linked outer membrane complex (COMC) composed of the major outer membrane porin (MOMP), the small cysteine-rich protein (OmcA) and the large cysteine-rich periplasmic protein (OmcB).

It localises to the cell outer membrane. Functionally, in elementary bodies (EBs, the infectious stage, which is able to survive outside the host cell) provides the structural integrity of the outer envelope through disulfide cross-links with the small cysteine-rich protein and the large cysteine-rich periplasmic protein. It has been described in publications as the Sarkosyl-insoluble COMC (Chlamydia outer membrane complex), and serves as the functional equivalent of peptidoglycan. In terms of biological role, permits diffusion of specific solutes through the outer membrane. In Chlamydia pneumoniae (Chlamydophila pneumoniae), this protein is Major outer membrane porin (ompA).